The chain runs to 110 residues: MFCTFFEKHHRKWDILLEKSTGVMEAMKVTSEEKEQLSTAIDRMNEGLDAFIQLYNESEIDEPLIQLDDDTAELMKQARDMYGQEKLNEKLNTIIKQILSISVSEEGEKE.

Over 1–7 (MFCTFFE) the chain is Cytoplasmic. A helical transmembrane segment spans residues 8-22 (KHHRKWDILLEKSTG). Residues 23–31 (VMEAMKVTS) lie on the Extracellular side of the membrane. A helical membrane pass occupies residues 32–55 (EEKEQLSTAIDRMNEGLDAFIQLY). Topologically, residues 56–66 (NESEIDEPLIQ) are cytoplasmic. A helical membrane pass occupies residues 67–81 (LDDDTAELMKQARDM). The Extracellular portion of the chain corresponds to 82 to 88 (YGQEKLN). Residues 89-102 (EKLNTIIKQILSIS) form a helical membrane-spanning segment. Over 103–110 (VSEEGEKE) the chain is Cytoplasmic.

In terms of assembly, monomer.

The protein resides in the cell membrane. Its function is as follows. Chaperone that facilitates the production and integration of integral membrane proteins into the bacterial lipid bilayer. The sequence is that of Protein mistic (mstX) from Bacillus subtilis (strain 168).